The chain runs to 431 residues: Mannan endo-1,4-beta-mannosidase 7 (431 aa).

A signal peptide spans 1-25; sequence MKLLALFPFLAIVIQLSCWELGTDA. Substrate contacts are provided by tryptophan 87 and asparagine 202. Glutamate 203 serves as the catalytic Proton donor. Substrate is bound at residue tyrosine 280. Glutamate 320 (nucleophile) is an active-site residue. Tryptophan 362 is a substrate binding site.

It belongs to the glycosyl hydrolase 5 (cellulase A) family. In terms of tissue distribution, expressed in stems, flowers, siliques and seeds. Expressed in root vasculature, leaf hydathodes, anther filaments, stigma, sepal vasculature, at the base and apical parts of siliques, and replum. Expressed in the micropylar endosperm and radicle tip in early germinating seeds.

It is found in the secreted. The catalysed reaction is Random hydrolysis of (1-&gt;4)-beta-D-mannosidic linkages in mannans, galactomannans and glucomannans.. In terms of biological role, required for both, loosening of the micropylar endosperm, and rupture of the seed coat in germinating seeds. May participate in the hydrolysis of the mannans in the cell wall of germinating seeds. The sequence is that of Mannan endo-1,4-beta-mannosidase 7 (MAN7) from Arabidopsis thaliana (Mouse-ear cress).